Reading from the N-terminus, the 391-residue chain is MRKLFTSESVTEGHPDKICDQISDAVLDAILDKDPNGRVACETAVTTGMVMVMGEISTKCYVDIPKLVRETIRGIGYDRAKYGFDCETCSVITSIDEQSVDIAMGVDEALESKKGEMDRLDAVGAGDQGMMFGFATNETKEYMPMPIEMAHKLSRRLSEVRKNGTLPYLRPDGKTQVTVEYENGKPVRIDAIVISTQHGPEVYLEQIEKDIKEHVIKVIVPSELLDENTKYFINPTGRFVVGGPQGDSGLTGRKIIVDTYGGYGRHGGGAFSGKDPTKVDRSAAYAARWVAKNLVAAGVADKLEIQLAYAIGVAKPVSISVDTFGTGKMTDEEIVSIVNKVFDLRPGAIIRDLDLRRPIYKQVAAYGHFGRTDIDVPWERLDKVEEIKKHI.

Position 14 (His-14) interacts with ATP. A Mg(2+)-binding site is contributed by Asp-16. A K(+)-binding site is contributed by Glu-42. Residues Glu-55 and Gln-98 each contribute to the L-methionine site. The segment at Gln-98–Glu-108 is flexible loop. ATP contacts are provided by residues Asp-172–Lys-174, Arg-238–Phe-239, Asp-247, Arg-253–Lys-254, Ala-270, and Lys-274. Asp-247 is a binding site for L-methionine. Lys-278 is an L-methionine binding site.

The protein belongs to the AdoMet synthase family. In terms of assembly, homotetramer; dimer of dimers. Requires Mg(2+) as cofactor. The cofactor is K(+).

Its subcellular location is the cytoplasm. It catalyses the reaction L-methionine + ATP + H2O = S-adenosyl-L-methionine + phosphate + diphosphate. It functions in the pathway amino-acid biosynthesis; S-adenosyl-L-methionine biosynthesis; S-adenosyl-L-methionine from L-methionine: step 1/1. Functionally, catalyzes the formation of S-adenosylmethionine (AdoMet) from methionine and ATP. The overall synthetic reaction is composed of two sequential steps, AdoMet formation and the subsequent tripolyphosphate hydrolysis which occurs prior to release of AdoMet from the enzyme. The polypeptide is S-adenosylmethionine synthase (Clostridium botulinum (strain Langeland / NCTC 10281 / Type F)).